Reading from the N-terminus, the 60-residue chain is MEKKLKITLVKSVIGQSERQKATVKSLGLRKLNQTVIKADTPEIRGMINKVSHLLKVEEI.

The protein belongs to the universal ribosomal protein uL30 family. In terms of assembly, part of the 50S ribosomal subunit.

The sequence is that of Large ribosomal subunit protein uL30 from Carboxydothermus hydrogenoformans (strain ATCC BAA-161 / DSM 6008 / Z-2901).